The primary structure comprises 197 residues: Recombination protein RecR (197 aa).

The segment at 55–70 (CVQCRDFTESEICTIC) adopts a C4-type zinc-finger fold. Positions 78–173 (QQLCVVESPA…RPSRLAQGMP (96 aa)) constitute a Toprim domain.

The protein belongs to the RecR family.

Functionally, may play a role in DNA repair. It seems to be involved in an RecBC-independent recombinational process of DNA repair. It may act with RecF and RecO. The chain is Recombination protein RecR from Xanthomonas axonopodis pv. citri (strain 306).